Consider the following 766-residue polypeptide: MAQWNQLQQLDTRYLEQLHQLYSDSFPMELRQFLAPWIESQDWAFAASKESHATLVFHNLLGEIDQQYSRFLQESNVLYQHNLRRIKQFLQSTYLEKPMEIARIVARCLWEEGRLLQTAVAAAQQGGPASHPNAAVITEKQQMLEQHLQDVRKKVQDLEQKMKVVENLQDDFDFNYKTLKSQSDLSELNGNNQSVTRQKMQQLEQMLTALDQLRRTIISDLASLLSAMEYVQKNLTDEELADWKRRQQIACIGGPPNICLDRLENWITSLAESQLQTRQQIRKLEELQQKVSYKGDPIVQHRPMLEERIVELFRNLMKSAFVVERQPCMPMHPDRPLVIKTGVQFTNKVRLLVKFPELNYQLKIKVCIDKDSGEGAALRGSRKFNILGTNTKVMNMEESNNGSLSAEFKHLTLREQRCGNGGRANCDASLIVTEELHLITFETEVYHQGLKIDLETHSLPVVVISNICQMPNAWASILWYNMLTNNPKNVNFFTKPPIGTWDQVAEVLSWQFSSTTKRGLSIEQLTTLAEKLLGPGVNYSGCQITWAKFCKENMAGKGFSFWVWLDNLIDLVKKYMLALWNEGYIIGFISKERERALLSPKPPGTFLLRFSESSKEGGITFTWVEKDISGKTQIQSVEPYTKQQLNSMSFAEIIMGYKIMDATNILVSPLVYLYPDIPKEEAFGKYCRPESQEHQEPTDPGTAPYLRTMFICVTPTTCTLDLPMSPGTFDSVMQFPGEGSESGNGNQFETLTFDVDLPSECAASPM.

The Essential for nuclear import motif lies at 150–162 (DVRKKVQDLEQKM). Residues 580–670 (WNEGYIIGFI…DATNILVSPL (91 aa)) enclose the SH2 domain. Ser-725 is modified (phosphoserine; by NLK).

This sequence belongs to the transcription factor STAT family. As to quaternary structure, forms a homodimer or a heterodimer with a related family member. Interacts with nlk.2. Phosphorylation of both tyrosine and serine residues, together with dimerization, is required for mesoderm induction.

The protein resides in the cytoplasm. Its subcellular location is the nucleus. In terms of biological role, transcription factor that binds to target promoter sequences and activates transcription upon il6st/gp130 stimulation. Mediates ventralization of embryos, at least in part via inhibition of smad2 signaling. Required for hairy2 to induce dll1/delta1 and promote neural crest cell proliferation and differentiation. Involved in TGFbeta-mediated mesoderm induction in early embryos, acting downstream of map3k7/tak1 and nlk.2. This is Signal transducer and activator of transcription 3.2 (stat3.2) from Xenopus laevis (African clawed frog).